The following is a 96-amino-acid chain: MLHTPIGRLRTMGFIEGMSLLILLFIAMPLKYWAGLPLAVTIVGSVHGGLFILYLLVLAYATFSVKWPLKWSAAGFIAAFVPFGNFLYDRGLRNYK.

The next 3 helical transmembrane spans lie at 14–34 (FIEG…KYWA), 38–58 (LAVT…LLVL), and 67–87 (WPLK…GNFL).

The protein resides in the cell membrane. This is an uncharacterized protein from Bacillus subtilis (strain 168).